Reading from the N-terminus, the 163-residue chain is 3-isopropylmalate dehydratase small subunit 2 (163 aa).

Belongs to the LeuD family. LeuD type 2 subfamily. As to quaternary structure, heterodimer of LeuC and LeuD.

The enzyme catalyses (2R,3S)-3-isopropylmalate = (2S)-2-isopropylmalate. It participates in amino-acid biosynthesis; L-leucine biosynthesis; L-leucine from 3-methyl-2-oxobutanoate: step 2/4. Functionally, catalyzes the isomerization between 2-isopropylmalate and 3-isopropylmalate, via the formation of 2-isopropylmaleate. This Pyrococcus abyssi (strain GE5 / Orsay) protein is 3-isopropylmalate dehydratase small subunit 2 (leuD2).